We begin with the raw amino-acid sequence, 216 residues long: Adenylate kinase (216 aa).

Residue 10-15 participates in ATP binding; it reads GAGKGT. The NMP stretch occupies residues 30–59; the sequence is STGDMLRAAVAAGTEVGKRAKAVMDAGKLV. Residues threonine 31, arginine 36, 57-59, 85-88, and glutamine 92 each bind AMP; these read KLV and GFPR. The LID stretch occupies residues 126-163; it reads GRYTCANCGAGYHDENLRPKVEGVCDRCGSTHFKRRAD. Arginine 127 provides a ligand contact to ATP. Cysteine 130, cysteine 133, cysteine 150, and cysteine 153 together coordinate Zn(2+). AMP is bound by residues arginine 160 and arginine 172. Alanine 200 provides a ligand contact to ATP.

This sequence belongs to the adenylate kinase family. In terms of assembly, monomer.

It is found in the cytoplasm. The enzyme catalyses AMP + ATP = 2 ADP. The protein operates within purine metabolism; AMP biosynthesis via salvage pathway; AMP from ADP: step 1/1. Its function is as follows. Catalyzes the reversible transfer of the terminal phosphate group between ATP and AMP. Plays an important role in cellular energy homeostasis and in adenine nucleotide metabolism. In Rhizobium rhizogenes (strain K84 / ATCC BAA-868) (Agrobacterium radiobacter), this protein is Adenylate kinase.